Consider the following 80-residue polypeptide: Cell division protein ZapB (80 aa).

Positions 3–80 form a coiled coil; sequence FEVFEKLEAK…ALLGKMNEVN (78 aa).

This sequence belongs to the ZapB family. In terms of assembly, homodimer. The ends of the coiled-coil dimer bind to each other, forming polymers. Interacts with FtsZ.

The protein resides in the cytoplasm. Functionally, non-essential, abundant cell division factor that is required for proper Z-ring formation. It is recruited early to the divisome by direct interaction with FtsZ, stimulating Z-ring assembly and thereby promoting cell division earlier in the cell cycle. Its recruitment to the Z-ring requires functional FtsA or ZipA. The chain is Cell division protein ZapB from Edwardsiella ictaluri (strain 93-146).